A 409-amino-acid polypeptide reads, in one-letter code: L-cysteine:1D-myo-inositol 2-amino-2-deoxy-alpha-D-glucopyranoside ligase (409 aa).

Cysteine 43 serves as a coordination point for Zn(2+). Residues 43–46 (CGIT), threonine 58, and 81–83 (NVT) contribute to the L-cysteinyl-5'-AMP site. The 'HIGH' region motif lies at 45-55 (ITPYDATHMGH). A 'ERGGDP' region motif is present at residues 183 to 188 (ERGGDP). An L-cysteinyl-5'-AMP-binding site is contributed by tryptophan 224. Cysteine 228 contacts Zn(2+). An L-cysteinyl-5'-AMP-binding site is contributed by 246–248 (GSD). Zn(2+) is bound at residue histidine 253. Valine 280 lines the L-cysteinyl-5'-AMP pocket. The short motif at 286–290 (KMSKS) is the 'KMSKS' region element.

It belongs to the class-I aminoacyl-tRNA synthetase family. MshC subfamily. Monomer. The cofactor is Zn(2+).

It carries out the reaction 1D-myo-inositol 2-amino-2-deoxy-alpha-D-glucopyranoside + L-cysteine + ATP = 1D-myo-inositol 2-(L-cysteinylamino)-2-deoxy-alpha-D-glucopyranoside + AMP + diphosphate + H(+). Its function is as follows. Catalyzes the ATP-dependent condensation of GlcN-Ins and L-cysteine to form L-Cys-GlcN-Ins. This Streptomyces griseus subsp. griseus (strain JCM 4626 / CBS 651.72 / NBRC 13350 / KCC S-0626 / ISP 5235) protein is L-cysteine:1D-myo-inositol 2-amino-2-deoxy-alpha-D-glucopyranoside ligase.